A 211-amino-acid polypeptide reads, in one-letter code: tRNA (guanine-N(7)-)-methyltransferase (211 aa).

Glutamate 44, aspartate 69, aspartate 96, and aspartate 118 together coordinate S-adenosyl-L-methionine. The active site involves aspartate 118. Lysine 122 lines the substrate pocket. The segment at 124–129 (KHEKRR) is interaction with RNA. Residues aspartate 154 and 191-194 (TEYE) contribute to the substrate site.

It belongs to the class I-like SAM-binding methyltransferase superfamily. TrmB family.

It catalyses the reaction guanosine(46) in tRNA + S-adenosyl-L-methionine = N(7)-methylguanosine(46) in tRNA + S-adenosyl-L-homocysteine. Its pathway is tRNA modification; N(7)-methylguanine-tRNA biosynthesis. Functionally, catalyzes the formation of N(7)-methylguanine at position 46 (m7G46) in tRNA. The polypeptide is tRNA (guanine-N(7)-)-methyltransferase (Streptococcus pyogenes serotype M6 (strain ATCC BAA-946 / MGAS10394)).